The primary structure comprises 333 residues: Protein RecA (333 aa).

Residue 69-76 (GPESSGKT) coordinates ATP.

The protein belongs to the RecA family.

The protein localises to the cytoplasm. Can catalyze the hydrolysis of ATP in the presence of single-stranded DNA, the ATP-dependent uptake of single-stranded DNA by duplex DNA, and the ATP-dependent hybridization of homologous single-stranded DNAs. It interacts with LexA causing its activation and leading to its autocatalytic cleavage. In Mesoplasma florum (strain ATCC 33453 / NBRC 100688 / NCTC 11704 / L1) (Acholeplasma florum), this protein is Protein RecA.